The chain runs to 351 residues: Protein TBATA (351 aa).

4 disordered regions span residues 16–40 (KAEL…PQKE), 167–186 (KKEK…KYSA), 195–216 (STRA…SSRH), and 292–351 (EVHE…RAES). A compositionally biased stretch (basic and acidic residues) spans 167 to 181 (KKEKEQKEEPLREQG). Composition is skewed to basic and acidic residues over residues 292-302 (EVHEPPQEKQE) and 340-351 (TEKKTSKPRAES).

The protein belongs to the TBATA family.

The protein localises to the cytoplasm. Its subcellular location is the cytosol. Functionally, may play a role in spermatid differentiation. Modulates thymic stromal cell proliferation and thymus function. In Homo sapiens (Human), this protein is Protein TBATA (TBATA).